Reading from the N-terminus, the 201-residue chain is MARYTGPVTRKSRRLGTDLVGGDQSFEKRPYPPGQHGRARIKDSEYRQQLQEKQKARFTYGVMEKQFRRYYEEAVRHSGKTGEELLKILESRLDNVVYRAGLARTRRMARQLVSHGHFSVNGVHVNVPSYRVSQYDIIDVRDNSLNTVPFQIARETAGDRPIPSWLQVVGERQRILIHQLPERAQIEVPLTEQLIVEYYSK.

The segment at 1–42 (MARYTGPVTRKSRRLGTDLVGGDQSFEKRPYPPGQHGRARIK) is disordered. The region spanning 91-157 (SRLDNVVYRA…VPFQIARETA (67 aa)) is the S4 RNA-binding domain.

This sequence belongs to the universal ribosomal protein uS4 family. Part of the 30S ribosomal subunit. Contacts protein S5. The interaction surface between S4 and S5 is involved in control of translational fidelity.

Functionally, one of the primary rRNA binding proteins, it binds directly to 16S rRNA where it nucleates assembly of the body of the 30S subunit. In terms of biological role, with S5 and S12 plays an important role in translational accuracy. This Mycobacterium marinum (strain ATCC BAA-535 / M) protein is Small ribosomal subunit protein uS4.